The primary structure comprises 458 residues: UDP-N-acetylmuramate--L-alanine ligase (458 aa).

An ATP-binding site is contributed by 118–124 (GTHGKTT).

The protein belongs to the MurCDEF family.

It localises to the cytoplasm. It carries out the reaction UDP-N-acetyl-alpha-D-muramate + L-alanine + ATP = UDP-N-acetyl-alpha-D-muramoyl-L-alanine + ADP + phosphate + H(+). It functions in the pathway cell wall biogenesis; peptidoglycan biosynthesis. Cell wall formation. This chain is UDP-N-acetylmuramate--L-alanine ligase, found in Clostridium acetobutylicum (strain ATCC 824 / DSM 792 / JCM 1419 / IAM 19013 / LMG 5710 / NBRC 13948 / NRRL B-527 / VKM B-1787 / 2291 / W).